The primary structure comprises 189 residues: Inner membrane-spanning protein YciB (189 aa).

A run of 5 helical transmembrane segments spans residues 3 to 23 (LLID…WGIY), 47 to 67 (IEPM…ATLL), 76 to 96 (WKPT…QLFF), 121 to 141 (WSWT…AHAF), and 149 to 169 (FKLF…ALYL).

The protein belongs to the YciB family.

It localises to the cell inner membrane. Its function is as follows. Plays a role in cell envelope biogenesis, maintenance of cell envelope integrity and membrane homeostasis. This chain is Inner membrane-spanning protein YciB, found in Paracidovorax citrulli (strain AAC00-1) (Acidovorax citrulli).